The primary structure comprises 202 residues: ATP-dependent Clp protease proteolytic subunit (202 aa).

Residue Ser-101 is the Nucleophile of the active site. Residue His-126 is part of the active site.

This sequence belongs to the peptidase S14 family. Component of the chloroplastic Clp protease core complex.

The protein resides in the plastid. Its subcellular location is the chloroplast stroma. The catalysed reaction is Hydrolysis of proteins to small peptides in the presence of ATP and magnesium. alpha-casein is the usual test substrate. In the absence of ATP, only oligopeptides shorter than five residues are hydrolyzed (such as succinyl-Leu-Tyr-|-NHMec, and Leu-Tyr-Leu-|-Tyr-Trp, in which cleavage of the -Tyr-|-Leu- and -Tyr-|-Trp bonds also occurs).. Its function is as follows. Cleaves peptides in various proteins in a process that requires ATP hydrolysis. Has a chymotrypsin-like activity. Plays a major role in the degradation of misfolded proteins. The polypeptide is ATP-dependent Clp protease proteolytic subunit (Acorus calamus (Sweet flag)).